The following is a 326-amino-acid chain: Metal-binding protein YtgA (326 aa).

Residues 1–21 (MSFFHTRKYKLILRGLLCLAG) form the signal peptide. Fe(2+) is bound by residues His-75, His-141, His-207, and Asp-299.

It belongs to the bacterial solute-binding protein 9 family. In terms of assembly, monomer.

The protein resides in the periplasm. In terms of biological role, part of the ATP-binding cassette (ABC) transport system YtgABCD involved in metal import. Binds Fe(2+), Mn(2+) and Ni(2+), with a preference for Fe(2+) and delivers them to the membrane permease for translocation into the cytoplasm. The protein is Metal-binding protein YtgA of Chlamydia trachomatis serovar D (strain ATCC VR-885 / DSM 19411 / UW-3/Cx).